The primary structure comprises 103 residues: Small ribosomal subunit protein uS17 (103 aa).

Positions 78–103 (SHSPKADKSAGSTAPAPEAAAKEVSE) are disordered.

It belongs to the universal ribosomal protein uS17 family. Part of the 30S ribosomal subunit.

Its function is as follows. One of the primary rRNA binding proteins, it binds specifically to the 5'-end of 16S ribosomal RNA. The sequence is that of Small ribosomal subunit protein uS17 from Parasynechococcus marenigrum (strain WH8102).